The chain runs to 239 residues: Ribosomal RNA small subunit methyltransferase G (239 aa).

Residues Gly79, Phe84, 130–131 (AE), and Arg149 contribute to the S-adenosyl-L-methionine site. Over residues 218-227 (KHKKTPKKYP) the composition is skewed to basic residues. The interval 218-239 (KHKKTPKKYPRQAGTPNKKPIA) is disordered.

The protein belongs to the methyltransferase superfamily. RNA methyltransferase RsmG family.

Its subcellular location is the cytoplasm. Functionally, specifically methylates the N7 position of a guanine in 16S rRNA. This is Ribosomal RNA small subunit methyltransferase G from Leuconostoc citreum (strain KM20).